A 216-amino-acid polypeptide reads, in one-letter code: Uracil phosphoribosyltransferase (216 aa).

Residues Arg-85, Arg-110, and 135–143 (DPMVATGYS) contribute to the 5-phospho-alpha-D-ribose 1-diphosphate site. Residues Ile-200 and 205–207 (GDA) contribute to the uracil site. Residue Asp-206 coordinates 5-phospho-alpha-D-ribose 1-diphosphate.

This sequence belongs to the UPRTase family. Mg(2+) is required as a cofactor.

It carries out the reaction UMP + diphosphate = 5-phospho-alpha-D-ribose 1-diphosphate + uracil. It functions in the pathway pyrimidine metabolism; UMP biosynthesis via salvage pathway; UMP from uracil: step 1/1. With respect to regulation, allosterically activated by GTP. Catalyzes the conversion of uracil and 5-phospho-alpha-D-ribose 1-diphosphate (PRPP) to UMP and diphosphate. The polypeptide is Uracil phosphoribosyltransferase (Burkholderia multivorans (strain ATCC 17616 / 249)).